The primary structure comprises 172 residues: Adenylate kinase isoenzyme 6 (172 aa).

Residues Gly-13, Gly-15, Lys-16, Thr-17, and Thr-18 each coordinate ATP. The NMP stretch occupies residues 33-56 (NVGDLAREEQLYDGYDEEYDCPIL). The segment at 33–56 (NVGDLAREEQLYDGYDEEYDCPIL) is NMPbind. The tract at residues 108 to 118 (TRGYNEKKLTD) is LID. Residues Arg-109 and Lys-148 each contribute to the ATP site.

Belongs to the adenylate kinase family. AK6 subfamily. Monomer and homodimer. Interacts with small ribosomal subunit protein uS11. Not a structural component of 43S pre-ribosomes, but transiently interacts with them by binding to uS11. Interacts with COIL (via C-terminus). As to expression, expressed in heart, brain, placenta, lung, liver, skeletal muscle, kidney, pancreas, chorionic villi and the central nervous system.

The protein localises to the cytoplasm. The protein resides in the nucleus. Its subcellular location is the nucleoplasm. It localises to the cajal body. It carries out the reaction AMP + ATP = 2 ADP. The catalysed reaction is ATP + H2O = ADP + phosphate + H(+). In terms of biological role, broad-specificity nucleoside monophosphate (NMP) kinase that catalyzes the reversible transfer of the terminal phosphate group between nucleoside triphosphates and monophosphates. Also has ATPase activity. Involved in the late cytoplasmic maturation steps of the 40S ribosomal particles, specifically 18S rRNA maturation. While NMP activity is not required for ribosome maturation, ATPase activity is. Associates transiently with small ribosomal subunit protein uS11. ATP hydrolysis breaks the interaction with uS11. May temporarily remove uS11 from the ribosome to enable a conformational change of the ribosomal RNA that is needed for the final maturation step of the small ribosomal subunit. Its NMP activity may have a role in nuclear energy homeostasis. AMP and dAMP are the preferred substrates, but CMP and dCMP are also good substrates. IMP is phosphorylated to a much lesser extent. All nucleoside triphosphates ATP, GTP, UTP, CTP, dATP, dCTP, dGTP, and TTP are accepted as phosphate donors. CTP is the best phosphate donor, followed by UTP, ATP, GTP and dCTP. May be involved in regulation of Cajal body (CB) formation. This chain is Adenylate kinase isoenzyme 6, found in Homo sapiens (Human).